We begin with the raw amino-acid sequence, 173 residues long: uncharacterized protein (173 aa).

One can recognise an N-acetyltransferase domain in the interval 4–173 (VKIVQVSEKD…TDFLLKKALV (170 aa)). Residues 97–99 (IYL), 106–110 (RGLGK), and 136–138 (NEN) each bind acetyl-CoA.

This is an uncharacterized protein from Lactobacillus delbrueckii subsp. lactis.